Here is a 251-residue protein sequence, read N- to C-terminus: 3-deoxy-manno-octulosonate cytidylyltransferase (251 aa).

This sequence belongs to the KdsB family.

The protein resides in the cytoplasm. It carries out the reaction 3-deoxy-alpha-D-manno-oct-2-ulosonate + CTP = CMP-3-deoxy-beta-D-manno-octulosonate + diphosphate. It functions in the pathway nucleotide-sugar biosynthesis; CMP-3-deoxy-D-manno-octulosonate biosynthesis; CMP-3-deoxy-D-manno-octulosonate from 3-deoxy-D-manno-octulosonate and CTP: step 1/1. Its pathway is bacterial outer membrane biogenesis; lipopolysaccharide biosynthesis. Activates KDO (a required 8-carbon sugar) for incorporation into bacterial lipopolysaccharide in Gram-negative bacteria. The polypeptide is 3-deoxy-manno-octulosonate cytidylyltransferase (Vibrio vulnificus (strain YJ016)).